A 151-amino-acid chain; its full sequence is Glycine and methionine-rich protein (151 aa).

The N-terminal stretch at 1-19 (MKTAVVLAAFSALMALARA) is a signal peptide.

Component of the acid-insoluble and acid-soluble organic matrix of calcified layers of the shell (at protein level).

Its subcellular location is the secreted. In Lottia gigantea (Giant owl limpet), this protein is Glycine and methionine-rich protein.